A 247-amino-acid polypeptide reads, in one-letter code: PF03932 family protein CutC (247 aa).

The span at 205-222 (KSTRPSLMESNSSAQMGS) shows a compositional bias: polar residues. Positions 205-226 (KSTRPSLMESNSSAQMGSNDVD) are disordered.

This sequence belongs to the CutC family.

It is found in the cytoplasm. The chain is PF03932 family protein CutC from Vibrio atlanticus (strain LGP32) (Vibrio splendidus (strain Mel32)).